A 350-amino-acid polypeptide reads, in one-letter code: tRNA N6-adenosine threonylcarbamoyltransferase (350 aa).

The Fe cation site is built by His-109 and His-113. Substrate-binding positions include 136 to 140, Asp-169, Gly-182, Asp-186, and Asn-284; that span reads TVSGG. Residue Asp-312 coordinates Fe cation.

It belongs to the KAE1 / TsaD family. Fe(2+) serves as cofactor.

It is found in the cytoplasm. It carries out the reaction L-threonylcarbamoyladenylate + adenosine(37) in tRNA = N(6)-L-threonylcarbamoyladenosine(37) in tRNA + AMP + H(+). Required for the formation of a threonylcarbamoyl group on adenosine at position 37 (t(6)A37) in tRNAs that read codons beginning with adenine. Is involved in the transfer of the threonylcarbamoyl moiety of threonylcarbamoyl-AMP (TC-AMP) to the N6 group of A37, together with TsaE and TsaB. TsaD likely plays a direct catalytic role in this reaction. This is tRNA N6-adenosine threonylcarbamoyltransferase from Pelodictyon phaeoclathratiforme (strain DSM 5477 / BU-1).